We begin with the raw amino-acid sequence, 132 residues long: Transcription antitermination protein NusB (132 aa).

The protein belongs to the NusB family.

In terms of biological role, involved in transcription antitermination. Required for transcription of ribosomal RNA (rRNA) genes. Binds specifically to the boxA antiterminator sequence of the ribosomal RNA (rrn) operons. This Campylobacter lari (strain RM2100 / D67 / ATCC BAA-1060) protein is Transcription antitermination protein NusB.